Here is a 655-residue protein sequence, read N- to C-terminus: Mannosyl-oligosaccharide 1,2-alpha-mannosidase IA (655 aa).

Topologically, residues 1–43 (MPVGGLLPLFSSPGGGGLGSGLGGGLGGGRKGSGPAAFRLTEK) are cytoplasmic. The chain crosses the membrane as a helical; Signal-anchor for type II membrane protein span at residues 44-64 (FVLLLVFSAFITLCFGAIFFL). The Lumenal segment spans residues 65–655 (PDSSKLLSGV…QKKEIDGKEK (591 aa)). Residues Cys478 and Cys510 are joined by a disulfide bond. A glycan (N-linked (GlcNAc...) asparagine) is linked at Asn515. Catalysis depends on Glu524, which acts as the Proton donor. Thr635 is a Ca(2+) binding site.

This sequence belongs to the glycosyl hydrolase 47 family. Ca(2+) is required as a cofactor. N-linked glycan at Asn-515 consists of Man(6)-GlcNAc(2).

Its subcellular location is the golgi apparatus membrane. The catalysed reaction is N(4)-(alpha-D-Man-(1-&gt;2)-alpha-D-Man-(1-&gt;2)-alpha-D-Man-(1-&gt;3)-[alpha-D-Man-(1-&gt;2)-alpha-D-Man-(1-&gt;3)-[alpha-D-Man-(1-&gt;2)-alpha-D-Man-(1-&gt;6)]-alpha-D-Man-(1-&gt;6)]-beta-D-Man-(1-&gt;4)-beta-D-GlcNAc-(1-&gt;4)-beta-D-GlcNAc)-L-asparaginyl-[protein] (N-glucan mannose isomer 9A1,2,3B1,2,3) + 4 H2O = N(4)-(alpha-D-Man-(1-&gt;3)-[alpha-D-Man-(1-&gt;3)-[alpha-D-Man-(1-&gt;6)]-alpha-D-Man-(1-&gt;6)]-beta-D-Man-(1-&gt;4)-beta-D-GlcNAc-(1-&gt;4)-beta-D-GlcNAc)-L-asparaginyl-[protein] (N-glucan mannose isomer 5A1,2) + 4 beta-D-mannose. It catalyses the reaction N(4)-(alpha-D-Man-(1-&gt;2)-alpha-D-Man-(1-&gt;2)-alpha-D-Man-(1-&gt;3)-[alpha-D-Man-(1-&gt;3)-[alpha-D-Man-(1-&gt;2)-alpha-D-Man-(1-&gt;6)]-alpha-D-Man-(1-&gt;6)]-beta-D-Man-(1-&gt;4)-beta-D-GlcNAc-(1-&gt;4)-beta-D-GlcNAc)-L-asparaginyl-[protein] (N-glucan mannose isomer 8A1,2,3B1,3) + 3 H2O = N(4)-(alpha-D-Man-(1-&gt;3)-[alpha-D-Man-(1-&gt;3)-[alpha-D-Man-(1-&gt;6)]-alpha-D-Man-(1-&gt;6)]-beta-D-Man-(1-&gt;4)-beta-D-GlcNAc-(1-&gt;4)-beta-D-GlcNAc)-L-asparaginyl-[protein] (N-glucan mannose isomer 5A1,2) + 3 beta-D-mannose. The protein operates within protein modification; protein glycosylation. Its activity is regulated as follows. Inhibited by both 1-deoxymannojirimycin and kifunensine. Involved in the maturation of Asn-linked oligosaccharides. Progressively trim alpha-1,2-linked mannose residues from Man(9)GlcNAc(2) to produce Man(5)GlcNAc(2). The polypeptide is Mannosyl-oligosaccharide 1,2-alpha-mannosidase IA (Man1a1) (Mus musculus (Mouse)).